Reading from the N-terminus, the 516-residue chain is Sodium channel protein Nach (516 aa).

The Cytoplasmic segment spans residues 1-49; it reads MGHEEELSPEQVDLKVSPLMGSLKRTWNDFCATSSIHGLRYTRDEDTNR. A helical transmembrane segment spans residues 50 to 70; it reads IVHFVWLLISLVMFICAVVMA. Topologically, residues 71-452 are extracellular; that stretch reads RTFYIDFRSN…LVSNLGSAFS (382 aa). Residues Asn-128, Asn-165, Asn-220, and Asn-348 are each glycosylated (N-linked (GlcNAc...) asparagine). A helical transmembrane segment spans residues 453–473; sequence LFVGMSMLSVVEIMYYFSVIL. Topologically, residues 474 to 516 are cytoplasmic; that stretch reads RKNYVLECEARKKMLHKGPKFAWPKANDSHSKHQKSVFIIHKM.

Belongs to the amiloride-sensitive sodium channel (TC 1.A.6) family.

Its subcellular location is the membrane. Its function is as follows. Part of a complex that plays a role in tracheal liquid clearance. Probable role in sodium transport. This chain is Sodium channel protein Nach (Nach), found in Drosophila ananassae (Fruit fly).